Reading from the N-terminus, the 119-residue chain is MGIMHTSELLKHIYDINLSYLLLAQRLIVQDKASAMFRLGINEEMATTLAALTLPQMVKLAETNQLVCHFRFDSHQTITQLTQDSRVDDLQQIHTGIMLSTRLLNDVNQPEEALRKKRA.

It belongs to the FlhD family. In terms of assembly, homodimer; disulfide-linked. Forms a heterohexamer composed of two FlhC and four FlhD subunits. Each FlhC binds a FlhD dimer, forming a heterotrimer, and a hexamer assembles by dimerization of two heterotrimers.

It is found in the cytoplasm. Functionally, functions in complex with FlhC as a master transcriptional regulator that regulates transcription of several flagellar and non-flagellar operons by binding to their promoter region. Activates expression of class 2 flagellar genes, including fliA, which is a flagellum-specific sigma factor that turns on the class 3 genes. Also regulates genes whose products function in a variety of physiological pathways. This chain is Flagellar transcriptional regulator FlhD, found in Shigella dysenteriae serotype 1 (strain Sd197).